The sequence spans 732 residues: Alpha-galactosidase Mel36A (732 aa).

Substrate is bound by residues 370-371 (DD), tryptophan 415, arginine 447, 480-484 (KWDMN), 530-533 (CSGG), and aspartate 552. Residue aspartate 482 is the Nucleophile of the active site. The active-site Proton donor is aspartate 552.

It belongs to the glycosyl hydrolase 36 family. In terms of assembly, homotetramer.

The catalysed reaction is Hydrolysis of terminal, non-reducing alpha-D-galactose residues in alpha-D-galactosides, including galactose oligosaccharides, galactomannans and galactolipids.. Hydrolyzes the short-chain alpha-galactosaccharide raffinose. This is Alpha-galactosidase Mel36A from Lactobacillus acidophilus (strain ATCC 700396 / NCK56 / N2 / NCFM).